A 409-amino-acid polypeptide reads, in one-letter code: 5-aminolevulinate synthase (409 aa).

The substrate site is built by Arg-21, Ser-137, and Lys-156. Residues Ser-189, His-217, and Thr-245 each contribute to the pyridoxal 5'-phosphate site. Residue Lys-248 is part of the active site. The residue at position 248 (Lys-248) is an N6-(pyridoxal phosphate)lysine. The pyridoxal 5'-phosphate site is built by Thr-277 and Thr-278. Residue Thr-365 participates in substrate binding.

This sequence belongs to the class-II pyridoxal-phosphate-dependent aminotransferase family. In terms of assembly, homodimer. Pyridoxal 5'-phosphate is required as a cofactor.

The enzyme catalyses succinyl-CoA + glycine + H(+) = 5-aminolevulinate + CO2 + CoA. The protein operates within porphyrin-containing compound metabolism; protoporphyrin-IX biosynthesis; 5-aminolevulinate from glycine: step 1/1. This chain is 5-aminolevulinate synthase (hemA), found in Paracoccus denitrificans (strain Pd 1222).